Consider the following 334-residue polypeptide: Phosphate acyltransferase (334 aa).

The protein belongs to the PlsX family. Homodimer. Probably interacts with PlsY.

The protein localises to the cytoplasm. The enzyme catalyses a fatty acyl-[ACP] + phosphate = an acyl phosphate + holo-[ACP]. The protein operates within lipid metabolism; phospholipid metabolism. Catalyzes the reversible formation of acyl-phosphate (acyl-PO(4)) from acyl-[acyl-carrier-protein] (acyl-ACP). This enzyme utilizes acyl-ACP as fatty acyl donor, but not acyl-CoA. In Caldicellulosiruptor bescii (strain ATCC BAA-1888 / DSM 6725 / KCTC 15123 / Z-1320) (Anaerocellum thermophilum), this protein is Phosphate acyltransferase.